The following is a 121-amino-acid chain: Large ribosomal subunit protein uL14 (121 aa).

The protein belongs to the universal ribosomal protein uL14 family. Part of the 50S ribosomal subunit. Forms a cluster with proteins L3 and L19. In the 70S ribosome, L14 and L19 interact and together make contacts with the 16S rRNA in bridges B5 and B8.

Binds to 23S rRNA. Forms part of two intersubunit bridges in the 70S ribosome. The polypeptide is Large ribosomal subunit protein uL14 (Mycoplasmopsis synoviae (strain 53) (Mycoplasma synoviae)).